The chain runs to 515 residues: Interferon alpha/beta receptor 2 (515 aa).

An N-terminal signal peptide occupies residues 1 to 26 (MLLSQNAFIFRSLNLVLMVYISLVFG). The Extracellular portion of the chain corresponds to 27 to 243 (ISYDSPDYTD…QESESAESAK (217 aa)). 2 cysteine pairs are disulfide-bonded: cysteine 39-cysteine 122 and cysteine 85-cysteine 93. Residues asparagine 58, asparagine 87, asparagine 116, asparagine 188, and asparagine 192 are each glycosylated (N-linked (GlcNAc...) asparagine). Residues cysteine 207 and cysteine 227 are joined by a disulfide bond. A helical transmembrane segment spans residues 244–264 (IGGIITVFLIALVLTSTIVTL). Topologically, residues 265 to 515 (KWIGYICLRN…VDLGDGYIMR (251 aa)) are cytoplasmic. 2 disordered regions span residues 318–418 (YDDE…EGSG) and 455–515 (EMVD…YIMR). Tyrosine 337 bears the Phosphotyrosine mark. Residues 362–375 (PESEEEPDLPEVDV) are compositionally biased toward acidic residues. Position 400 is a phosphoserine (serine 400). Positions 418–444 (GGRITFNVDLNSVFLRVLDDEDSDDLE) are mediates interaction with STAT2 (and required for the recruitment of USP18). A compositionally biased stretch (polar residues) spans 464–488 (NVQSNHLLASGEGTQPTFPSPSSEG). Serine 467 is modified (phosphoserine). At tyrosine 512 the chain carries Phosphotyrosine.

This sequence belongs to the type II cytokine receptor family. Heterodimer with IFNAR1; forming the receptor for type I interferon. Interacts with JAK1. Interacts with the transcriptional factors STAT1 and STAT2. Interacts with USP18; indirectly via STAT2, it negatively regulates the assembly of the ternary interferon-IFNAR1-IFNAR2 complex and therefore type I interferon signaling. Post-translationally, phosphorylated on tyrosine residues upon interferon binding. Phosphorylation at Tyr-337 or Tyr-512 are sufficient to mediate interferon dependent activation of STAT1, STAT2 and STAT3 leading to antiproliferative effects on many different cell types. Glycosylated. Isoform 3 is detected in the urine (at protein level). Expressed in blood cells. Expressed in lymphoblastoid and fibrosarcoma cell lines.

The protein localises to the cell membrane. It localises to the secreted. In terms of biological role, together with IFNAR1, forms the heterodimeric receptor for type I interferons (including interferons alpha, beta, epsilon, omega and kappa). Type I interferon binding activates the JAK-STAT signaling cascade, resulting in transcriptional activation or repression of interferon-regulated genes that encode the effectors of the interferon response. Mechanistically, type I interferon-binding brings the IFNAR1 and IFNAR2 subunits into close proximity with one another, driving their associated Janus kinases (JAKs) (TYK2 bound to IFNAR1 and JAK1 bound to IFNAR2) to cross-phosphorylate one another. The activated kinases phosphorylate specific tyrosine residues on the intracellular domains of IFNAR1 and IFNAR2, forming docking sites for the STAT transcription factors (STAT1, STAT2 and STAT). STAT proteins are then phosphorylated by the JAKs, promoting their translocation into the nucleus to regulate expression of interferon-regulated genes. Its function is as follows. Potent inhibitor of type I IFN receptor activity. The polypeptide is Interferon alpha/beta receptor 2 (IFNAR2) (Homo sapiens (Human)).